The chain runs to 567 residues: uncharacterized protein (567 aa).

Helical transmembrane passes span 65-85 (LSLFGIFSISFSVLGMLPSVA), 92-112 (LWYVGYPGLLWAWLIAMFFLI), 190-210 (WQWFLLAVAIQCFNCVLACLP), 220-240 (VATYLNTAFLFIAGITILAYG), 302-322 (AIVMTAVIGGVVGWIMQIIVA), 353-373 (LGILSLTIISAIIMGQSALIA), 412-432 (IISILILFLTFAGTVTLDAVF), 434-454 (VGAVAAFIAFTVPIAIRVFFT), 473-493 (IGLLAVSFVALMIPILCFPSV), and 503-523 (WTCLVYGGPMLFTLVWYAISA).

Belongs to the amino acid-polyamine-organocation (APC) superfamily.

Its subcellular location is the membrane. This is an uncharacterized protein from Schizosaccharomyces pombe (strain 972 / ATCC 24843) (Fission yeast).